A 415-amino-acid polypeptide reads, in one-letter code: Serine hydroxymethyltransferase 1 (415 aa).

(6S)-5,6,7,8-tetrahydrofolate contacts are provided by residues L122 and 126 to 128 (GHL). K230 carries the N6-(pyridoxal phosphate)lysine modification.

This sequence belongs to the SHMT family. As to quaternary structure, homodimer. It depends on pyridoxal 5'-phosphate as a cofactor.

The protein resides in the cytoplasm. The catalysed reaction is (6R)-5,10-methylene-5,6,7,8-tetrahydrofolate + glycine + H2O = (6S)-5,6,7,8-tetrahydrofolate + L-serine. It functions in the pathway one-carbon metabolism; tetrahydrofolate interconversion. Its pathway is amino-acid biosynthesis; glycine biosynthesis; glycine from L-serine: step 1/1. Its function is as follows. Catalyzes the reversible interconversion of serine and glycine with tetrahydrofolate (THF) serving as the one-carbon carrier. This reaction serves as the major source of one-carbon groups required for the biosynthesis of purines, thymidylate, methionine, and other important biomolecules. Also exhibits THF-independent aldolase activity toward beta-hydroxyamino acids, producing glycine and aldehydes, via a retro-aldol mechanism. This Burkholderia thailandensis (strain ATCC 700388 / DSM 13276 / CCUG 48851 / CIP 106301 / E264) protein is Serine hydroxymethyltransferase 1.